The primary structure comprises 123 residues: Large ribosomal subunit protein uL18 (123 aa).

It belongs to the universal ribosomal protein uL18 family. As to quaternary structure, part of the 50S ribosomal subunit; part of the 5S rRNA/L5/L18/L25 subcomplex. Contacts the 5S and 23S rRNAs.

Its function is as follows. This is one of the proteins that bind and probably mediate the attachment of the 5S RNA into the large ribosomal subunit, where it forms part of the central protuberance. This chain is Large ribosomal subunit protein uL18, found in Chlamydia caviae (strain ATCC VR-813 / DSM 19441 / 03DC25 / GPIC) (Chlamydophila caviae).